Here is a 65-residue protein sequence, read N- to C-terminus: Disintegrin VLO4 (65 aa).

The Disintegrin domain occupies 1 to 65 (MNSGNPCCDP…PDCPRNPWKG (65 aa)). 4 disulfides stabilise this stretch: C7–C30, C21–C27, C26–C51, and C39–C58. Residues 43-45 (RGD) carry the Cell attachment site motif.

It belongs to the disintegrin family. Dimeric disintegrin subfamily. Homodimer; disulfide-linked. As to expression, expressed by the venom gland.

The protein localises to the secreted. Poor inhibitor of platelet aggregation. The disintegrin inhibits the adhesion of cells expressing the RGD-dependent integrin alpha-5/beta-1 (ITGA5/ITGB1) to immobilized fibronectin. Inhibition on alpha-2b/beta-3 (ITGA2B/ITGB3) is low. The chain is Disintegrin VLO4 from Macrovipera lebetina obtusa (Levant blunt-nosed viper).